The following is an 87-amino-acid chain: Large ribosomal subunit protein bL27 (87 aa).

Residues 1-26 form a disordered region; that stretch reads MAHKKGTGSTRNGRDSNSKRLGVKAY.

Belongs to the bacterial ribosomal protein bL27 family.

In Prochlorococcus marinus (strain SARG / CCMP1375 / SS120), this protein is Large ribosomal subunit protein bL27.